The sequence spans 86 residues: U15-lycotoxin-Ls1c (86 aa).

The N-terminal stretch at M1–S20 is a signal peptide. The WAP domain maps to D21–T66. 5 cysteine pairs are disulfide-bonded: C24–C54, C32–C58, C41–C53, C42–C80, and C47–C62.

The protein belongs to the venom protein 11 family. 01 (wap-1) subfamily. Contains 5 disulfide bonds. Expressed by the venom gland.

The protein localises to the secreted. Functionally, has antibacterial activity. In Lycosa singoriensis (Wolf spider), this protein is U15-lycotoxin-Ls1c.